The primary structure comprises 72 residues: DNA-directed RNA polymerase subunit omega (72 aa).

The protein belongs to the RNA polymerase subunit omega family. In terms of assembly, the RNAP catalytic core consists of 2 alpha, 1 beta, 1 beta' and 1 omega subunit. When a sigma factor is associated with the core the holoenzyme is formed, which can initiate transcription.

It catalyses the reaction RNA(n) + a ribonucleoside 5'-triphosphate = RNA(n+1) + diphosphate. Promotes RNA polymerase assembly. Latches the N- and C-terminal regions of the beta' subunit thereby facilitating its interaction with the beta and alpha subunits. This Clostridium kluyveri (strain NBRC 12016) protein is DNA-directed RNA polymerase subunit omega.